The chain runs to 66 residues: Phylloseptin-H9 (66 aa).

Residues 1 to 22 form the signal peptide; sequence MAFLKKSLFLVLFLGLVSLSIC. Positions 23 to 44 are excised as a propeptide; the sequence is EEEKRETEEEENDQEEDDKSEE. Residues 24–44 are disordered; the sequence is EEKRETEEEENDQEEDDKSEE. Acidic residues predominate over residues 30 to 41; the sequence is EEEENDQEEDDK. Position 65 is a leucine amide (leucine 65).

In terms of tissue distribution, expressed by the skin glands.

Its subcellular location is the secreted. Has antimicrobial activity. The polypeptide is Phylloseptin-H9 (Pithecopus hypochondrialis (Orange-legged leaf frog)).